Reading from the N-terminus, the 205-residue chain is Endoplasmic reticulum membrane protein complex subunit 10 (205 aa).

The N-terminal stretch at 1 to 17 is a signal peptide; that stretch reads MLVRLLRVILLASMVFC. Topologically, residues 18–172 are lumenal; that stretch reads ADILQLSYSD…VKEVSWFQKN (155 aa). The N-linked (GlcNAc...) asparagine glycan is linked to Asn47. Residues 173-190 form a helical membrane-spanning segment; sequence WKMLLLGLLIYNFVAGSA. The Cytoplasmic segment spans residues 191-205; it reads KKQQQGGAGADQKTE.

As to quaternary structure, component of the ER membrane protein complex (EMC).

Its subcellular location is the endoplasmic reticulum membrane. In terms of biological role, part of the endoplasmic reticulum membrane protein complex (EMC) that enables the energy-independent insertion into endoplasmic reticulum membranes of newly synthesized membrane proteins. Preferentially accommodates proteins with transmembrane domains that are weakly hydrophobic or contain destabilizing features such as charged and aromatic residues. Involved in the cotranslational insertion of multi-pass membrane proteins in which stop-transfer membrane-anchor sequences become ER membrane spanning helices. It is also required for the post-translational insertion of tail-anchored/TA proteins in endoplasmic reticulum membranes. By mediating the proper cotranslational insertion of N-terminal transmembrane domains in an N-exo topology, with translocated N-terminus in the lumen of the ER, controls the topology of multi-pass membrane proteins. This Saccharomyces cerevisiae (strain ATCC 204508 / S288c) (Baker's yeast) protein is Endoplasmic reticulum membrane protein complex subunit 10.